The chain runs to 79 residues: MLKLRLKRNGRKRQPAYRLVIMESTTRRNGRPVDEVGYYNPITKESYFNKEKIVKWLSYGVQPTETVFQLLKKSNLIEI.

Belongs to the bacterial ribosomal protein bS16 family.

It localises to the plastid. It is found in the chloroplast. In Thalassiosira pseudonana (Marine diatom), this protein is Small ribosomal subunit protein bS16c.